The following is an 871-amino-acid chain: Leucine--tRNA ligase (871 aa).

The 'HIGH' region motif lies at 43–53 (PYPSGRIHIGH). A 'KMSKS' region motif is present at residues 629 to 633 (KMSKS). Position 632 (Lys-632) interacts with ATP.

The protein belongs to the class-I aminoacyl-tRNA synthetase family.

It is found in the cytoplasm. It catalyses the reaction tRNA(Leu) + L-leucine + ATP = L-leucyl-tRNA(Leu) + AMP + diphosphate. This Chelativorans sp. (strain BNC1) protein is Leucine--tRNA ligase.